We begin with the raw amino-acid sequence, 69 residues long: Cytochrome c oxidase subunit 8A, mitochondrial (69 aa).

A mitochondrion-targeting transit peptide spans M1–K25. The SIFI-degron motif lies at S2 to L19. Topologically, residues I26–G36 are mitochondrial matrix. The helical transmembrane segment at I37–S60 threads the bilayer. Over H61–E69 the chain is Mitochondrial intermembrane.

Belongs to the cytochrome c oxidase VIII family. As to quaternary structure, component of the cytochrome c oxidase (complex IV, CIV), a multisubunit enzyme composed of 14 subunits. The complex is composed of a catalytic core of 3 subunits MT-CO1, MT-CO2 and MT-CO3, encoded in the mitochondrial DNA, and 11 supernumerary subunits COX4I, COX5A, COX5B, COX6A, COX6B, COX6C, COX7A, COX7B, COX7C, COX8 and NDUFA4, which are encoded in the nuclear genome. The complex exists as a monomer or a dimer and forms supercomplexes (SCs) in the inner mitochondrial membrane with NADH-ubiquinone oxidoreductase (complex I, CI) and ubiquinol-cytochrome c oxidoreductase (cytochrome b-c1 complex, complex III, CIII), resulting in different assemblies (supercomplex SCI(1)III(2)IV(1) and megacomplex MCI(2)III(2)IV(2)). In terms of processing, in response to mitochondrial stress, the precursor protein is ubiquitinated by the SIFI complex in the cytoplasm before mitochondrial import, leading to its degradation. Within the SIFI complex, UBR4 initiates ubiquitin chain that are further elongated or branched by KCMF1.

The protein resides in the mitochondrion inner membrane. The protein operates within energy metabolism; oxidative phosphorylation. In terms of biological role, component of the cytochrome c oxidase, the last enzyme in the mitochondrial electron transport chain which drives oxidative phosphorylation. The respiratory chain contains 3 multisubunit complexes succinate dehydrogenase (complex II, CII), ubiquinol-cytochrome c oxidoreductase (cytochrome b-c1 complex, complex III, CIII) and cytochrome c oxidase (complex IV, CIV), that cooperate to transfer electrons derived from NADH and succinate to molecular oxygen, creating an electrochemical gradient over the inner membrane that drives transmembrane transport and the ATP synthase. Cytochrome c oxidase is the component of the respiratory chain that catalyzes the reduction of oxygen to water. Electrons originating from reduced cytochrome c in the intermembrane space (IMS) are transferred via the dinuclear copper A center (CU(A)) of subunit 2 and heme A of subunit 1 to the active site in subunit 1, a binuclear center (BNC) formed by heme A3 and copper B (CU(B)). The BNC reduces molecular oxygen to 2 water molecules using 4 electrons from cytochrome c in the IMS and 4 protons from the mitochondrial matrix. The chain is Cytochrome c oxidase subunit 8A, mitochondrial (COX8A) from Gorilla gorilla gorilla (Western lowland gorilla).